The following is a 299-amino-acid chain: MSTGKETAGAHEAAIPELVIISGMSGAGRSTAAKCLEDLGWFVVDNLPPALIPTMVELGARSQGNVARIAVVVDVRGRRFFDNLRESLADLDARGVTRRIVFLESSDDALVRRFESVRRPHPLQGDGRIVDGIAAERELLRELRGDADLVIDTSSLNVHELRAKMDAQFAGDQEPELRATVMSFGFKYGLPVDADLVVDMRFLPNPHWVPELRPFTGLNEEVSSYVLNQPGAKEFLDRYAELLQLIAAGYRREGKRYVTVAVGCTGGKHRSVAMSEKLAARLAAEGVETVVVHRDMGRE.

An ATP-binding site is contributed by 23 to 30; sequence GMSGAGRS. 74–77 is a binding site for GTP; sequence DVRG.

Belongs to the RapZ-like family.

In terms of biological role, displays ATPase and GTPase activities. This chain is Nucleotide-binding protein SCO1952, found in Streptomyces coelicolor (strain ATCC BAA-471 / A3(2) / M145).